Reading from the N-terminus, the 698-residue chain is Elongation factor G (698 aa).

The tr-type G domain maps to 6-281 (ENIRNIGICA…AVVDYLPSPI (276 aa)). GTP contacts are provided by residues 15 to 22 (AHIDAGKT), 79 to 83 (DTPGH), and 133 to 136 (NKMD).

It belongs to the TRAFAC class translation factor GTPase superfamily. Classic translation factor GTPase family. EF-G/EF-2 subfamily.

It localises to the cytoplasm. Its function is as follows. Catalyzes the GTP-dependent ribosomal translocation step during translation elongation. During this step, the ribosome changes from the pre-translocational (PRE) to the post-translocational (POST) state as the newly formed A-site-bound peptidyl-tRNA and P-site-bound deacylated tRNA move to the P and E sites, respectively. Catalyzes the coordinated movement of the two tRNA molecules, the mRNA and conformational changes in the ribosome. The sequence is that of Elongation factor G from Rickettsia bellii (strain RML369-C).